We begin with the raw amino-acid sequence, 85 residues long: MVKLRLKRCGRKQQAVYRIVAIDVRSRREGRDLRKVGFYDPIKNQTCLNVPAILYFLEKGAQPTRTVYDILRKAELFKEKERILS.

Belongs to the bacterial ribosomal protein bS16 family.

The protein resides in the plastid. It localises to the chloroplast. This is Small ribosomal subunit protein bS16c from Agrostis stolonifera (Creeping bentgrass).